The sequence spans 624 residues: MRGVVKLFFLSCSLVSLVSSEETGKSPTANYDHYMPKATATIDPSVFALSNDFEITDVPTTREYTFDITKALASPDGYEREVYVVNNMFPGPVIEANTGDTIIVHVNNHLEEGQSIHWHGLRQLGTAFMDGVPGITQCPIPPGSSFTYQFTVSHQSGTFWWHSHYSNSMADGIWGPLIIHSPNEPLQRGRDYDEDRIVFITDWVHDNSEVVIAALATPEGYKGSPAPPQGDAILINGRGQTNCTATGSSSCTYPPPPEIHVPVNCRVRLRFISATAHPMYRITIDNHPLEVVETDGTAVYGPTVHEISIAPGERYSAIINTSEGKEGDAFWLRTSVALGCMFGGIDQVGLAVVRYTGNGMVSTEEPQTTAWSDLAGATTPCAGLDQTYTLSPRESFSAPREFSQSHVFNSQRGAFVNVYGNTFQGYGFNNISYQNQIFNPLLSIVQRGGSCESTLVASTTFPDLGSGNIIINNLDGVIDHPYHLHGNEFQVIGRGTGALSLDNLTNIDFNLDNPVRKDTLWIQGGSWVVLRITTDNPGVWALHCHIGWHLTEGKLAVVVIQPGAIGHMEGPESWTNLCANTDPNAFGPARRSPSPSIQSSKTSTFQYLREVKGKVVKRRGAREA.

A signal peptide spans 1-20; the sequence is MRGVVKLFFLSCSLVSLVSS. 2 Plastocyanin-like domains span residues 69-183 and 195-355; these read TKAL…HSPN and DRIV…VVRY. Positions 117, 119, 162, and 164 each coordinate Cu cation. An intrachain disulfide couples cysteine 138 to cysteine 578. N-linked (GlcNAc...) asparagine glycosylation is found at asparagine 242, asparagine 320, and asparagine 430. The 94-residue stretch at 469 to 562 folds into the Plastocyanin-like 3 domain; that stretch reads IIINNLDGVI…GKLAVVVIQP (94 aa). Cu cation is bound by residues histidine 480, histidine 483, and histidine 485. Residue asparagine 503 is glycosylated (N-linked (GlcNAc...) asparagine). Cu cation-binding residues include histidine 543, cysteine 544, histidine 545, and histidine 549. Residues 582-603 form a disordered region; that stretch reads DPNAFGPARRSPSPSIQSSKTS. A compositionally biased stretch (low complexity) spans 592-603; the sequence is SPSPSIQSSKTS.

This sequence belongs to the multicopper oxidase family. Cu cation serves as cofactor.

The protein localises to the secreted. It localises to the cell wall. It carries out the reaction 4 hydroquinone + O2 = 4 benzosemiquinone + 2 H2O. In terms of biological role, laccase that catalyzes the oxidation of certain aromatic compounds, including L-dopa, to quinones, which then polymerize to melanin. Able to oxidize a wide variety of aromatic diphenol and diamino groups in the ortho, meta, and para positions but not monophenolic groups such as in phenol, tyramine, or tyrosine. Plays an important role in virulence. Plays a role in dissemination to extrapulmonary sites but is not involved in pulmonary growth or in elicitation of cellular immune responses in the lung. The polypeptide is Laccase-1 (LAC1) (Cryptococcus neoformans var. grubii serotype A (strain H99 / ATCC 208821 / CBS 10515 / FGSC 9487) (Filobasidiella neoformans var. grubii)).